Reading from the N-terminus, the 245-residue chain is Endonuclease III (245 aa).

Residues 119–138 enclose the HhH domain; that stretch reads MDKLVTLPGVGRKTANVILG. [4Fe-4S] cluster is bound by residues Cys198, Cys205, Cys208, and Cys214.

Belongs to the Nth/MutY family. Requires [4Fe-4S] cluster as cofactor.

It carries out the reaction 2'-deoxyribonucleotide-(2'-deoxyribose 5'-phosphate)-2'-deoxyribonucleotide-DNA = a 3'-end 2'-deoxyribonucleotide-(2,3-dehydro-2,3-deoxyribose 5'-phosphate)-DNA + a 5'-end 5'-phospho-2'-deoxyribonucleoside-DNA + H(+). Functionally, DNA repair enzyme that has both DNA N-glycosylase activity and AP-lyase activity. The DNA N-glycosylase activity releases various damaged pyrimidines from DNA by cleaving the N-glycosidic bond, leaving an AP (apurinic/apyrimidinic) site. The AP-lyase activity cleaves the phosphodiester bond 3' to the AP site by a beta-elimination, leaving a 3'-terminal unsaturated sugar and a product with a terminal 5'-phosphate. Has a preference for oxidized pyrimidines, such as thymine glycol (prefers 5S isomers) 5,6-dihydrouracil:G, 5-hydroxyuracil:G, 5-hydroxycytosine:G and urea:A. Cleaves ssDNA containing an AP site. The polypeptide is Endonuclease III (Mycobacterium tuberculosis (strain ATCC 25618 / H37Rv)).